Here is a 176-residue protein sequence, read N- to C-terminus: Large ribosomal subunit protein uL15 (176 aa).

The segment covering 1-13 (MKLNDLRDNEGAR) has biased composition (basic and acidic residues). Disordered stretches follow at residues 1–48 (MKLN…AIKG) and 151–176 (IPAA…AKAE). A compositionally biased stretch (gly residues) spans 21–35 (RGIGSGKGKTGGRGQ). Over residues 156–176 (PEHEKKAARSEANKKAKAKAE) the composition is skewed to basic and acidic residues.

Belongs to the universal ribosomal protein uL15 family. Part of the 50S ribosomal subunit.

Binds to the 23S rRNA. This Erythrobacter litoralis (strain HTCC2594) protein is Large ribosomal subunit protein uL15.